The following is a 470-amino-acid chain: Ribulose bisphosphate carboxylase large chain (470 aa).

Substrate-binding residues include Asn-115 and Thr-165. Residue Lys-167 is the Proton acceptor of the active site. Residue Lys-169 participates in substrate binding. Lys-193, Asp-195, and Glu-196 together coordinate Mg(2+). An N6-carboxylysine modification is found at Lys-193. Residue His-286 is the Proton acceptor of the active site. Substrate-binding residues include Arg-287, His-319, and Ser-371.

It belongs to the RuBisCO large chain family. Type I subfamily. In terms of assembly, heterohexadecamer of 8 large chains and 8 small chains. Mg(2+) serves as cofactor.

The protein localises to the carboxysome. It carries out the reaction 2 (2R)-3-phosphoglycerate + 2 H(+) = D-ribulose 1,5-bisphosphate + CO2 + H2O. It catalyses the reaction D-ribulose 1,5-bisphosphate + O2 = 2-phosphoglycolate + (2R)-3-phosphoglycerate + 2 H(+). In terms of biological role, ruBisCO catalyzes two reactions: the carboxylation of D-ribulose 1,5-bisphosphate, the primary event in carbon dioxide fixation, as well as the oxidative fragmentation of the pentose substrate in the photorespiration process. Both reactions occur simultaneously and in competition at the same active site. This chain is Ribulose bisphosphate carboxylase large chain, found in Synechococcus sp. (strain CC9902).